The sequence spans 148 residues: SPbeta prophage-derived disulfide bond formation protein B (148 aa).

Residues 7–26 traverse the membrane as a helical segment; sequence KSFFLLLFFLSFFGTMASLF. Cysteines 36 and 39 form a disulfide. 2 consecutive transmembrane segments (helical) span residues 41 to 60 and 67 to 84; these read YQRI…LLKK and YVVF…YHYI. Cys95 and Cys102 are joined by a disulfide. Residues 111–135 form a helical membrane-spanning segment; sequence GFITLPLMSSVCFALIFGIGLKLII.

It belongs to the DsbB family. BdbC subfamily.

Its subcellular location is the cell membrane. Important but not absolutely essential for the production of the lantibiotic sublancin 168, it may also be required for the stability of other secreted proteins. Not required for competence for DNA uptake. The polypeptide is SPbeta prophage-derived disulfide bond formation protein B (bdbB) (Bacillus subtilis (strain 168)).